The sequence spans 143 residues: Small ribosomal subunit protein eS19B (143 aa).

It belongs to the eukaryotic ribosomal protein eS19 family. Component of the small ribosomal subunit (SSU). Mature yeast ribosomes consist of a small (40S) and a large (60S) subunit. The 40S small subunit contains 1 molecule of ribosomal RNA (18S rRNA) and at least 33 different proteins. The large 60S subunit contains 3 rRNA molecules (25S, 5.8S and 5S rRNA) and at least 46 different proteins.

The protein resides in the cytoplasm. It localises to the nucleus. Component of the ribosome, a large ribonucleoprotein complex responsible for the synthesis of proteins in the cell. The small ribosomal subunit (SSU) binds messenger RNAs (mRNAs) and translates the encoded message by selecting cognate aminoacyl-transfer RNA (tRNA) molecules. The large subunit (LSU) contains the ribosomal catalytic site termed the peptidyl transferase center (PTC), which catalyzes the formation of peptide bonds, thereby polymerizing the amino acids delivered by tRNAs into a polypeptide chain. The nascent polypeptides leave the ribosome through a tunnel in the LSU and interact with protein factors that function in enzymatic processing, targeting, and the membrane insertion of nascent chains at the exit of the ribosomal tunnel. eS19 is required for proper maturation of the small (40S) ribosomal subunit. Binds to 40S pre-ribosomal particles, probably required after association of NOC4 but before association of ENP1, TSR1 and RIO2 with 20/21S pre-rRNA. This Schizosaccharomyces pombe (strain 972 / ATCC 24843) (Fission yeast) protein is Small ribosomal subunit protein eS19B (rps1902).